The chain runs to 149 residues: MERTFLMVKPDGVQRGLIGEVITRFERRGFKMVASRFEKLPDARVMEHYAEHVQKPFFPGLKAYITSGPCFLMVWEGKDIVKISRDMIGATNPAGAAPGTIRGDYALEIGMNVIHGSDSVETANREIAIHFKPEELVSYTRIDEQYLYE.

ATP-binding residues include K9, F57, R85, T91, R102, and N112. The active-site Pros-phosphohistidine intermediate is H115.

The protein belongs to the NDK family. The cofactor is Mg(2+).

Its subcellular location is the cytoplasm. It carries out the reaction a 2'-deoxyribonucleoside 5'-diphosphate + ATP = a 2'-deoxyribonucleoside 5'-triphosphate + ADP. It catalyses the reaction a ribonucleoside 5'-diphosphate + ATP = a ribonucleoside 5'-triphosphate + ADP. Its function is as follows. Major role in the synthesis of nucleoside triphosphates other than ATP. The ATP gamma phosphate is transferred to the NDP beta phosphate via a ping-pong mechanism, using a phosphorylated active-site intermediate. The sequence is that of Nucleoside diphosphate kinase from Methanospirillum hungatei JF-1 (strain ATCC 27890 / DSM 864 / NBRC 100397 / JF-1).